A 473-amino-acid polypeptide reads, in one-letter code: Bifunctional protein GlmU (473 aa).

Positions 1–241 (MATQPTPLTA…VGSLVGINDR (241 aa)) are pyrophosphorylase. UDP-N-acetyl-alpha-D-glucosamine-binding positions include 13 to 16 (LAAG), Lys-27, Gln-84, and 89 to 90 (GT). Asp-114 serves as a coordination point for Mg(2+). 4 residues coordinate UDP-N-acetyl-alpha-D-glucosamine: Gly-152, Glu-167, Asn-182, and Asn-239. Position 239 (Asn-239) interacts with Mg(2+). Positions 242–262 (AQLAAAEEVLYGRIADRLRKS) are linker. Residues 263–473 (GVTIRTSARI…KARLKDAAKK (211 aa)) are N-acetyltransferase. 2 residues coordinate UDP-N-acetyl-alpha-D-glucosamine: Arg-343 and Lys-361. His-373 acts as the Proton acceptor in catalysis. The UDP-N-acetyl-alpha-D-glucosamine site is built by Tyr-376 and Asn-387. Residues Ala-390, 396-397 (NY), Ser-415, Thr-433, and Arg-450 each bind acetyl-CoA.

This sequence in the N-terminal section; belongs to the N-acetylglucosamine-1-phosphate uridyltransferase family. It in the C-terminal section; belongs to the transferase hexapeptide repeat family. In terms of assembly, homotrimer. Requires Mg(2+) as cofactor.

It is found in the cytoplasm. It carries out the reaction alpha-D-glucosamine 1-phosphate + acetyl-CoA = N-acetyl-alpha-D-glucosamine 1-phosphate + CoA + H(+). The catalysed reaction is N-acetyl-alpha-D-glucosamine 1-phosphate + UTP + H(+) = UDP-N-acetyl-alpha-D-glucosamine + diphosphate. The protein operates within nucleotide-sugar biosynthesis; UDP-N-acetyl-alpha-D-glucosamine biosynthesis; N-acetyl-alpha-D-glucosamine 1-phosphate from alpha-D-glucosamine 6-phosphate (route II): step 2/2. It participates in nucleotide-sugar biosynthesis; UDP-N-acetyl-alpha-D-glucosamine biosynthesis; UDP-N-acetyl-alpha-D-glucosamine from N-acetyl-alpha-D-glucosamine 1-phosphate: step 1/1. Its pathway is bacterial outer membrane biogenesis; LPS lipid A biosynthesis. Functionally, catalyzes the last two sequential reactions in the de novo biosynthetic pathway for UDP-N-acetylglucosamine (UDP-GlcNAc). The C-terminal domain catalyzes the transfer of acetyl group from acetyl coenzyme A to glucosamine-1-phosphate (GlcN-1-P) to produce N-acetylglucosamine-1-phosphate (GlcNAc-1-P), which is converted into UDP-GlcNAc by the transfer of uridine 5-monophosphate (from uridine 5-triphosphate), a reaction catalyzed by the N-terminal domain. This Sorangium cellulosum (strain So ce56) (Polyangium cellulosum (strain So ce56)) protein is Bifunctional protein GlmU.